We begin with the raw amino-acid sequence, 299 residues long: Methionyl-tRNA formyltransferase (299 aa).

109 to 112 (SLLP) is a binding site for (6S)-5,6,7,8-tetrahydrofolate.

Belongs to the Fmt family.

The catalysed reaction is L-methionyl-tRNA(fMet) + (6R)-10-formyltetrahydrofolate = N-formyl-L-methionyl-tRNA(fMet) + (6S)-5,6,7,8-tetrahydrofolate + H(+). Attaches a formyl group to the free amino group of methionyl-tRNA(fMet). The formyl group appears to play a dual role in the initiator identity of N-formylmethionyl-tRNA by promoting its recognition by IF2 and preventing the misappropriation of this tRNA by the elongation apparatus. The protein is Methionyl-tRNA formyltransferase of Dinoroseobacter shibae (strain DSM 16493 / NCIMB 14021 / DFL 12).